A 483-amino-acid chain; its full sequence is Glutamyl-tRNA(Gln) amidotransferase subunit A (483 aa).

Residues K75 and S150 each act as charge relay system in the active site. The active-site Acyl-ester intermediate is S174.

This sequence belongs to the amidase family. GatA subfamily. As to quaternary structure, heterotrimer of A, B and C subunits.

It carries out the reaction L-glutamyl-tRNA(Gln) + L-glutamine + ATP + H2O = L-glutaminyl-tRNA(Gln) + L-glutamate + ADP + phosphate + H(+). In terms of biological role, allows the formation of correctly charged Gln-tRNA(Gln) through the transamidation of misacylated Glu-tRNA(Gln) in organisms which lack glutaminyl-tRNA synthetase. The reaction takes place in the presence of glutamine and ATP through an activated gamma-phospho-Glu-tRNA(Gln). This Legionella pneumophila subsp. pneumophila (strain Philadelphia 1 / ATCC 33152 / DSM 7513) protein is Glutamyl-tRNA(Gln) amidotransferase subunit A.